A 348-amino-acid chain; its full sequence is Phosphate acyltransferase (348 aa).

Belongs to the PlsX family. In terms of assembly, homodimer. Probably interacts with PlsY.

The protein resides in the cytoplasm. The enzyme catalyses a fatty acyl-[ACP] + phosphate = an acyl phosphate + holo-[ACP]. It participates in lipid metabolism; phospholipid metabolism. Catalyzes the reversible formation of acyl-phosphate (acyl-PO(4)) from acyl-[acyl-carrier-protein] (acyl-ACP). This enzyme utilizes acyl-ACP as fatty acyl donor, but not acyl-CoA. This Rhizobium leguminosarum bv. trifolii (strain WSM2304) protein is Phosphate acyltransferase.